Here is a 382-residue protein sequence, read N- to C-terminus: MLEPPNHQTTAKTDQAASMSIQLLLFVDERPSSHEYIQPIRDYIKTVSQDCPCQLEVIEIHEQPHLVEHFRLVATPALVKVVPEPRQTLAGSNLVNQLKKWWPKWLSSLEENHHDSLLEKSSNVGYSGELMRLSDEIFRLKKDKENLQEQLKFKDQVLAMLAHDLRSPLTAASIAVETLELAKNQDPTEKQQKLTAQLFNQTRNQFRVMNRLITDILQASKSMNAQLQVHQTEVFLPRLSKEIVEQYNDLLTEKSLKLIQDVPQDVPGVYADEELIRQVIVNLIDNAIKYTSEGGEITLSILHRTSQKVQVSVCDTGPGIPEEKQERIFEGHFRLQRDQGKEGYGLGLSLCRKIIRVHYGQIWVDSVPGQGSCFHFTLPVYR.

The Histidine kinase domain maps to 160–382 (MLAHDLRSPL…CFHFTLPVYR (223 aa)). The residue at position 163 (histidine 163) is a Phosphohistidine; by autocatalysis.

As to quaternary structure, homooligomerizes. Interacts with KaiC. Participates in the KaiABC clock complex, whose core is composed of a KaiC homohexamer, 6 KaiB and up to 6 KaiA dimers. SasA and KaiB(fs) compete to bind to KaiC.

It catalyses the reaction ATP + protein L-histidine = ADP + protein N-phospho-L-histidine.. Functionally, member of the two-component regulatory system SasA/RpaA involved in genome-wide circadian gene expression. One of several clock output pathways. Participates in the Kai clock protein complex, the main circadian regulator in cyanobacteria, via its interaction with KaiC. KaiC enhances the autophosphorylation activity of SasA, which then transfers its phosphate group to RpaA to activate it. In addition to its output function, recruits fold-shifted KaiB (KaiB(fs)) to KaiC to cooperatively form the KaiB(6):KaiC(6) complex (independent of SasA kinase activity). Required for robustness of the circadian rhythm of gene expression and is involved in clock output, also required for adaptation to light/dark cycles. This Crocosphaera subtropica (strain ATCC 51142 / BH68) (Cyanothece sp. (strain ATCC 51142)) protein is Adaptive-response sensory kinase SasA.